Here is a 36-residue protein sequence, read N- to C-terminus: Photosystem II reaction center protein M (36 aa).

A helical membrane pass occupies residues 5 to 25; that stretch reads ILGLIATALFIIIPTSFLLIL.

It belongs to the PsbM family. In terms of assembly, PSII is composed of 1 copy each of membrane proteins PsbA, PsbB, PsbC, PsbD, PsbE, PsbF, PsbH, PsbI, PsbJ, PsbK, PsbL, PsbM, PsbT, PsbX, PsbY, PsbZ, Psb30/Ycf12, at least 3 peripheral proteins of the oxygen-evolving complex and a large number of cofactors. It forms dimeric complexes.

The protein resides in the plastid. The protein localises to the chloroplast thylakoid membrane. One of the components of the core complex of photosystem II (PSII). PSII is a light-driven water:plastoquinone oxidoreductase that uses light energy to abstract electrons from H(2)O, generating O(2) and a proton gradient subsequently used for ATP formation. It consists of a core antenna complex that captures photons, and an electron transfer chain that converts photonic excitation into a charge separation. This subunit is found at the monomer-monomer interface. The chain is Photosystem II reaction center protein M from Chlorokybus atmophyticus (Soil alga).